The chain runs to 1643 residues: DNA-directed RNA polymerase subunit beta' (1643 aa).

Residues Cys-64, Cys-66, Cys-79, and Cys-82 each coordinate Zn(2+). Mg(2+) contacts are provided by Asp-684, Asp-686, and Asp-688. 4 residues coordinate Zn(2+): Cys-1046, Cys-1239, Cys-1246, and Cys-1249.

Belongs to the RNA polymerase beta' chain family. As to quaternary structure, the RNAP catalytic core consists of 2 alpha, 1 beta, 1 beta' and 1 omega subunit. When a sigma factor is associated with the core the holoenzyme is formed, which can initiate transcription. Mg(2+) is required as a cofactor. It depends on Zn(2+) as a cofactor.

The enzyme catalyses RNA(n) + a ribonucleoside 5'-triphosphate = RNA(n+1) + diphosphate. In terms of biological role, DNA-dependent RNA polymerase catalyzes the transcription of DNA into RNA using the four ribonucleoside triphosphates as substrates. The sequence is that of DNA-directed RNA polymerase subunit beta' from Petrotoga mobilis (strain DSM 10674 / SJ95).